Here is a 166-residue protein sequence, read N- to C-terminus: Regulator of ribonuclease activity A (166 aa).

The protein belongs to the RraA family. In terms of assembly, homotrimer. Binds to both RNA-binding sites in the C-terminal region of Rne and to RhlB.

The protein localises to the cytoplasm. Globally modulates RNA abundance by binding to RNase E (Rne) and regulating its endonucleolytic activity. Can modulate Rne action in a substrate-dependent manner by altering the composition of the degradosome. Modulates RNA-binding and helicase activities of the degradosome. The protein is Regulator of ribonuclease activity A of Histophilus somni (strain 2336) (Haemophilus somnus).